The chain runs to 404 residues: Probable eukaryotic initiation factor 4A (404 aa).

Residues 1–28 (MAQQGKVEPQDQDSFLDDQPGIRPIPSF) form a disordered region. The Q motif signature appears at 26 to 54 (PSFDDMPLHQNLLRGIYSHGFEKPSSIQQ). Positions 57–231 (IVPFTRGGDI…KKFMRDPTRI (175 aa)) constitute a Helicase ATP-binding domain. 70–77 (AQSGTGKT) contributes to the ATP binding site. Positions 179 to 182 (DEAD) match the DEAD box motif. Residues 242 to 402 (GIKQFFIAVE…ELPVDFAAYL (161 aa)) enclose the Helicase C-terminal domain.

This sequence belongs to the DEAD box helicase family. eIF4A subfamily. As to quaternary structure, eIF4F is a multi-subunit complex, the composition of which varies with external and internal environmental conditions. It is composed of at least EIF4A, EIF4E and EIF4G.

The catalysed reaction is ATP + H2O = ADP + phosphate + H(+). In terms of biological role, ATP-dependent RNA helicase which is a subunit of the eIF4F complex involved in cap recognition and is required for mRNA binding to ribosome. In the current model of translation initiation, eIF4A unwinds RNA secondary structures in the 5'-UTR of mRNAs which is necessary to allow efficient binding of the small ribosomal subunit, and subsequent scanning for the initiator codon. In Trypanosoma brucei brucei (strain 927/4 GUTat10.1), this protein is Probable eukaryotic initiation factor 4A.